The chain runs to 303 residues: Glutathione transport system permease protein GsiD (303 aa).

6 consecutive transmembrane segments (helical) span residues 40–60 (AMTA…ARWI), 105–125 (LAAG…LGLL), 144–164 (LFAF…GSGI), 165–185 (ANVI…LVRG), 222–242 (IVVF…SLSF), and 266–286 (VIAP…VLAF). The ABC transmembrane type-1 domain maps to 101–290 (AQISLAAGVF…LTVLAFNLLG (190 aa)).

It belongs to the binding-protein-dependent transport system permease family. As to quaternary structure, the complex is composed of two ATP-binding proteins (GsiA), two transmembrane proteins (GsiC and GsiD) and a solute-binding protein (GsiB).

The protein localises to the cell inner membrane. In terms of biological role, part of the ABC transporter complex GsiABCD involved in glutathione import. Probably responsible for the translocation of the substrate across the membrane. The protein is Glutathione transport system permease protein GsiD of Escherichia coli O1:K1 / APEC.